Consider the following 2662-residue polypeptide: Centrosome-associated protein CEP250L1 (2662 aa).

2 coiled-coil regions span residues 1030-1248 (KVHY…EEEE) and 1281-1719 (ARTH…IDAQ).

The protein localises to the cytoplasm. It localises to the cytoskeleton. The protein resides in the microtubule organizing center. It is found in the centrosome. In terms of biological role, part of the centrosome inner core complex. Plays a role in the formation and/or stabilization of the mitotic spindle. Required for proper nuclear segregation and DNA partitioning during cell division. The sequence is that of Centrosome-associated protein CEP250L1 from Toxoplasma gondii (strain ATCC 50611 / Me49).